The following is a 732-amino-acid chain: uncharacterized protein (732 aa).

The interval 145 to 207 is disordered; it reads ETLRDSVINP…RRRPEMASPH (63 aa). Over residues 170–179 the composition is skewed to basic and acidic residues; the sequence is KGHETLERGS. The Reverse transcriptase domain occupies 176–524; the sequence is ERGSKALGPE…KKIPFLGYLI (349 aa).

It localises to the mitochondrion. This is an uncharacterized protein from Marchantia polymorpha (Common liverwort).